A 607-amino-acid chain; its full sequence is Albumin (607 aa).

The signal sequence occupies residues 1–18 (MKWVTFISLLLLFSSAYS). The propeptide occupies 19 to 24 (RGVFRR). 3 consecutive Albumin domains span residues 19-209 (RGVF…DAMR), 210-402 (EKVL…KLKH), and 403-600 (LVDE…KLVA). Position 27 (H27) interacts with Cu cation. Phosphoserine is present on S29. Residues E30 and D37 each contribute to the Ca(2+) site. A disulfide bond links C77 and C86. S82 and S89 each carry phosphoserine. Residue H91 participates in Zn(2+) binding. Cystine bridges form between C99/C115, C114/C125, C147/C192, C191/C200, C223/C269, and C268/C276. Residue T107 is modified to Phosphothreonine. Position 228 is an N6-succinyllysine (K228). E267 contacts Ca(2+). Zn(2+)-binding residues include H270 and D272. Residues D272, E275, D278, and D282 each coordinate Ca(2+). 8 disulfide bridges follow: C288–C302, C301–C312, C339–C384, C383–C392, C415–C461, C460–C471, C484–C500, and C499–C510. S296 bears the Phosphoserine mark. S442 carries the post-translational modification Phosphoserine. 2 positions are modified to phosphothreonine: T443 and T445. K459 carries the post-translational modification N6-succinyllysine. S512 carries the post-translational modification Phosphoserine. Cystine bridges form between C537–C582 and C581–C590. At K557 the chain carries N6-methyllysine. Phosphothreonine is present on T569. N6-succinyllysine is present on K587.

It belongs to the ALB/AFP/VDB family. As to quaternary structure, interacts with FCGRT; this interaction regulates ALB homeostasis. Interacts with TASOR. In plasma, occurs in a covalently-linked complex with chromophore-bound alpha-1-microglobulin; this interaction does not prevent fatty acid binding to ALB. Phosphorylated by FAM20C in the extracellular medium. As to expression, plasma.

The protein resides in the secreted. In terms of biological role, binds water, Ca(2+), Na(+), K(+), fatty acids, hormones, bilirubin and drugs. Its main function is the regulation of the colloidal osmotic pressure of blood. Major zinc transporter in plasma, typically binds about 80% of all plasma zinc. Major calcium and magnesium transporter in plasma, binds approximately 45% of circulating calcium and magnesium in plasma. Potentially has more than two calcium-binding sites and might additionally bind calcium in a non-specific manner. The shared binding site between zinc and calcium at residue Asp-272 suggests a crosstalk between zinc and calcium transport in the blood. The rank order of affinity is zinc &gt; calcium &gt; magnesium. Binds to the bacterial siderophore enterobactin and inhibits enterobactin-mediated iron uptake of E.coli from ferric transferrin, and may thereby limit the utilization of iron and growth of enteric bacteria such as E.coli. Does not prevent iron uptake by the bacterial siderophore aerobactin. In Ovis aries (Sheep), this protein is Albumin (ALB).